A 464-amino-acid chain; its full sequence is 3-isopropylmalate dehydratase large subunit (464 aa).

Residues C337, C397, and C400 each contribute to the [4Fe-4S] cluster site.

This sequence belongs to the aconitase/IPM isomerase family. LeuC type 1 subfamily. In terms of assembly, heterodimer of LeuC and LeuD. The cofactor is [4Fe-4S] cluster.

The catalysed reaction is (2R,3S)-3-isopropylmalate = (2S)-2-isopropylmalate. It functions in the pathway amino-acid biosynthesis; L-leucine biosynthesis; L-leucine from 3-methyl-2-oxobutanoate: step 2/4. Functionally, catalyzes the isomerization between 2-isopropylmalate and 3-isopropylmalate, via the formation of 2-isopropylmaleate. The chain is 3-isopropylmalate dehydratase large subunit from Bacillus cereus (strain AH187).